Consider the following 103-residue polypeptide: Small ribosomal subunit protein uS10 (103 aa).

It belongs to the universal ribosomal protein uS10 family. As to quaternary structure, part of the 30S ribosomal subunit.

Its function is as follows. Involved in the binding of tRNA to the ribosomes. In Shewanella frigidimarina (strain NCIMB 400), this protein is Small ribosomal subunit protein uS10.